The primary structure comprises 131 residues: Global transcriptional regulator Spx (131 aa).

Cys-10 and Cys-13 are joined by a disulfide.

It belongs to the ArsC family. Spx subfamily. In terms of assembly, interacts with the C-terminal domain of the alpha subunit of the RNAP.

It is found in the cytoplasm. Functionally, global transcriptional regulator that plays a key role in stress response and exerts either positive or negative regulation of genes. Acts by interacting with the C-terminal domain of the alpha subunit of the RNA polymerase (RNAP). This interaction can enhance binding of RNAP to the promoter region of target genes and stimulate their transcription, or block interaction of RNAP with activator. The sequence is that of Global transcriptional regulator Spx from Staphylococcus epidermidis (strain ATCC 35984 / DSM 28319 / BCRC 17069 / CCUG 31568 / BM 3577 / RP62A).